Here is a 211-residue protein sequence, read N- to C-terminus: Small ribosomal subunit protein bS6c alpha (211 aa).

Residues 1–19 (MATFSLTSTLPSSSPTTSL) are compositionally biased toward low complexity. 2 disordered regions span residues 1–25 (MATFSLTSTLPSSSPTTSLHSIPKP) and 80–100 (DEDPPSTPPAGLAVEEKPEPQ). Residues 1–65 (MATFSLTSTL…YGPYVKAIAL (65 aa)) constitute a chloroplast transit peptide.

Belongs to the bacterial ribosomal protein bS6 family. As to quaternary structure, component of the chloroplast small ribosomal subunit (SSU). Mature 70S chloroplast ribosomes of higher plants consist of a small (30S) and a large (50S) subunit. The 30S small subunit contains 1 molecule of ribosomal RNA (16S rRNA) and 24 different proteins. The 50S large subunit contains 3 rRNA molecules (23S, 5S and 4.5S rRNA) and 33 different proteins.

The protein resides in the plastid. It localises to the chloroplast. Its function is as follows. Component of the chloroplast ribosome (chloro-ribosome), a dedicated translation machinery responsible for the synthesis of chloroplast genome-encoded proteins, including proteins of the transcription and translation machinery and components of the photosynthetic apparatus. This chain is Small ribosomal subunit protein bS6c alpha (RPS6), found in Spinacia oleracea (Spinach).